We begin with the raw amino-acid sequence, 806 residues long: Phenylalanine--tRNA ligase beta subunit (806 aa).

Residues 39–154 (SAGLKKIVVG…EAIAPGTDVY (116 aa)) form the tRNA-binding domain. In terms of domain architecture, B5 spans 410 to 485 (PQPKVIQFDS…RLYGYDNLPS (76 aa)). Residues D463, D469, E472, and E473 each coordinate Mg(2+). In terms of domain architecture, FDX-ACB spans 713-806 (PKFPEVTRDI…LVATFQAKVR (94 aa)).

This sequence belongs to the phenylalanyl-tRNA synthetase beta subunit family. Type 1 subfamily. Tetramer of two alpha and two beta subunits. Mg(2+) is required as a cofactor.

The protein localises to the cytoplasm. The catalysed reaction is tRNA(Phe) + L-phenylalanine + ATP = L-phenylalanyl-tRNA(Phe) + AMP + diphosphate + H(+). The polypeptide is Phenylalanine--tRNA ligase beta subunit (Latilactobacillus sakei subsp. sakei (strain 23K) (Lactobacillus sakei subsp. sakei)).